Here is a 199-residue protein sequence, read N- to C-terminus: MVKFTPSFNRLVGEFAKLPGIGRKTAVRLTLFMLRQTSQDALALGEAVRELKERTRFCSRCFYFTEEDPCPLCTDVGRDDQLICVVEEPQDVIAIERSRSFRGRYHVLHGSLSPLDGIGPDDLKIDALLERLQQNNVKEVLLATNFDVEGEATALYLAKVIQPFGVKVTRLAHGIPTGSDLEYVDEATVNHAVEGRREL.

A C4-type zinc finger spans residues 58 to 73 (CSRCFYFTEEDPCPLC). In terms of domain architecture, Toprim spans 81 to 176 (QLICVVEEPQ…KVTRLAHGIP (96 aa)).

This sequence belongs to the RecR family.

In terms of biological role, may play a role in DNA repair. It seems to be involved in an RecBC-independent recombinational process of DNA repair. It may act with RecF and RecO. The protein is Recombination protein RecR of Syntrophotalea carbinolica (strain DSM 2380 / NBRC 103641 / GraBd1) (Pelobacter carbinolicus).